The chain runs to 465 residues: Macrophage metalloelastase (465 aa).

Residues 1–21 (MKFLLVLVLLVSLQVSACGAA) form the signal peptide. A propeptide spans 22 to 101 (PMNESEFAEW…DVQHLRAVPQ (80 aa)) (activation peptide). The short motif at 86-93 (SRCGVPDV) is the Cysteine switch element. Cys88 provides a ligand contact to Zn(2+). Residues Asp120 and Asp154 each coordinate Ca(2+). Zn(2+) contacts are provided by His164 and Asp166. Residues Asp171, Gly172, Gly174, and Thr176 each contribute to the Ca(2+) site. His179 is a binding site for Zn(2+). Residues Gly186 and Asp190 each coordinate Ca(2+). Residue His192 coordinates Zn(2+). Residues Asp194, Glu195, and Glu197 each coordinate Ca(2+). His214 contributes to the Zn(2+) binding site. Glu215 is an active-site residue. Positions 218 and 224 each coordinate Zn(2+). A disulfide bridge connects residues Cys278 and Cys465. Hemopexin repeat units follow at residues 281–324 (SLSF…WPTI), 325–371 (PSGI…GFPA), 373–421 (VKKI…FPGI), and 422–465 (RPKI…WFGC). Residue Asp285 coordinates Ca(2+). N-linked (GlcNAc...) asparagine glycosylation is present at Asn313. Asp377 and Asp426 together coordinate Ca(2+).

It belongs to the peptidase M10A family. Requires Ca(2+) as cofactor. The cofactor is Zn(2+).

The protein localises to the secreted. The protein resides in the extracellular space. It localises to the extracellular matrix. It carries out the reaction Hydrolysis of soluble and insoluble elastin. Specific cleavages are also produced at 14-Ala-|-Leu-15 and 16-Tyr-|-Leu-17 in the B chain of insulin.. Functionally, may be involved in tissue injury and remodeling. Has significant elastolytic activity. Can accept large and small amino acids at the P1' site, but has a preference for leucine. Aromatic or hydrophobic residues are preferred at the P1 site, with small hydrophobic residues (preferably alanine) occupying P3. In Rattus norvegicus (Rat), this protein is Macrophage metalloelastase (Mmp12).